Here is a 283-residue protein sequence, read N- to C-terminus: Formamidopyrimidine-DNA glycosylase (283 aa).

Proline 2 acts as the Schiff-base intermediate with DNA in catalysis. Catalysis depends on glutamate 3, which acts as the Proton donor. Lysine 58 serves as the catalytic Proton donor; for beta-elimination activity. DNA contacts are provided by histidine 100, arginine 119, and lysine 162. An FPG-type zinc finger spans residues 247–283 (RVYGREGQRCQTPDCAEKILRKVQSGRSSFYCPACQR). Residue arginine 273 is the Proton donor; for delta-elimination activity of the active site.

Belongs to the FPG family. As to quaternary structure, monomer. It depends on Zn(2+) as a cofactor.

The enzyme catalyses Hydrolysis of DNA containing ring-opened 7-methylguanine residues, releasing 2,6-diamino-4-hydroxy-5-(N-methyl)formamidopyrimidine.. It carries out the reaction 2'-deoxyribonucleotide-(2'-deoxyribose 5'-phosphate)-2'-deoxyribonucleotide-DNA = a 3'-end 2'-deoxyribonucleotide-(2,3-dehydro-2,3-deoxyribose 5'-phosphate)-DNA + a 5'-end 5'-phospho-2'-deoxyribonucleoside-DNA + H(+). Its function is as follows. Involved in base excision repair of DNA damaged by oxidation or by mutagenic agents. Acts as a DNA glycosylase that recognizes and removes damaged bases. Has a preference for oxidized purines, such as 7,8-dihydro-8-oxoguanine (8-oxoG). Has AP (apurinic/apyrimidinic) lyase activity and introduces nicks in the DNA strand. Cleaves the DNA backbone by beta-delta elimination to generate a single-strand break at the site of the removed base with both 3'- and 5'-phosphates. The chain is Formamidopyrimidine-DNA glycosylase from Jannaschia sp. (strain CCS1).